The following is a 295-amino-acid chain: MSNISSLNPFSGSSRTLVENKQVGASDAESLLKEMFSLEAQKEYAKECNLGRYTELKANRRLNHIDLVPKVHGMKMLSMFRSEYDKGNVPSSGVLNIPRILLYLVRTSHSSTVGSITIRLVDTYSASDSCLLEAIDGQEFTVDLSSLPCMIGFSPTYDCKLEMVDGRRRCFGIVTELNGVIGEGHTVAMVHAYWKAMFRTKPGNYTRVKPAAKFIAPFDRLKQLSSGQLDAFIKGISNNSIDHGYLMGSTINNIKKKTNVKEESPTSDPQSGEVSSMTQSVPGAADTRIPKPRRR.

The segment at 256–295 (KKTNVKEESPTSDPQSGEVSSMTQSVPGAADTRIPKPRRR) is disordered. Polar residues predominate over residues 266–281 (TSDPQSGEVSSMTQSV).

The protein belongs to the bromovirus movement protein family.

The protein resides in the host cell junction. The protein localises to the host plasmodesma. Transports viral genome to neighboring plant cells directly through plasmosdesmata, without any budding. The movement protein allows efficient cell to cell propagation, by bypassing the host cell wall barrier. Acts by forming a tubular structure at the host plasmodesmata, enlarging it enough to allow free passage of virion capsids. This is Movement protein from Broad bean mottle virus.